A 498-amino-acid polypeptide reads, in one-letter code: Putative F-box/FBD/LRR-repeat protein At4g03220 (498 aa).

One can recognise an F-box domain in the interval 23–71 (VDRISNLPDSLNHQILLLLPLKSAAQASLLSKRWRSLFLSLPDLDFTSI). LRR repeat units follow at residues 148-172 (SQNL…SSAR), 175-200 (FQKL…FFTD), and 235-259 (SLQL…CFYS). Residues 416 to 466 (YWESQAYELESFLNHLEFVEIHGFVECENEMSLAIFLLRHGKALIKMTLRS) enclose the FBD domain.

In Arabidopsis thaliana (Mouse-ear cress), this protein is Putative F-box/FBD/LRR-repeat protein At4g03220.